A 517-amino-acid chain; its full sequence is Cytochrome P450 1A1 (517 aa).

Positions 34-45 are mitochondrial targeting signal; sequence WQPRVPKGLKSP. O-linked (GlcNAc) serine glycosylation occurs at Ser-72. Residue Phe-229 coordinates substrate. Cys-462 provides a ligand contact to heme.

It belongs to the cytochrome P450 family. As to quaternary structure, interacts with cytosolic chaperones HSP70 and HSP90; this interaction is required for initial targeting to mitochondria. Interacts (via mitochondrial targeting signal) with TOMM40 (via N-terminus); this interaction is required for translocation across the mitochondrial outer membrane. The cofactor is heme.

Its subcellular location is the endoplasmic reticulum membrane. It is found in the mitochondrion inner membrane. It localises to the microsome membrane. The protein localises to the cytoplasm. The enzyme catalyses an organic molecule + reduced [NADPH--hemoprotein reductase] + O2 = an alcohol + oxidized [NADPH--hemoprotein reductase] + H2O + H(+). It carries out the reaction estrone + reduced [NADPH--hemoprotein reductase] + O2 = 2-hydroxyestrone + oxidized [NADPH--hemoprotein reductase] + H2O + H(+). It catalyses the reaction estrone + reduced [NADPH--hemoprotein reductase] + O2 = 4-hydroxyestrone + oxidized [NADPH--hemoprotein reductase] + H2O + H(+). The catalysed reaction is estrone + reduced [NADPH--hemoprotein reductase] + O2 = 6alpha-hydroxyestrone + oxidized [NADPH--hemoprotein reductase] + H2O + H(+). The enzyme catalyses estrone + reduced [NADPH--hemoprotein reductase] + O2 = 15alpha-hydroxyestrone + oxidized [NADPH--hemoprotein reductase] + H2O + H(+). It carries out the reaction estrone + reduced [NADPH--hemoprotein reductase] + O2 = 16alpha-hydroxyestrone + oxidized [NADPH--hemoprotein reductase] + H2O + H(+). It catalyses the reaction 17beta-estradiol + reduced [NADPH--hemoprotein reductase] + O2 = 2-hydroxy-17beta-estradiol + oxidized [NADPH--hemoprotein reductase] + H2O + H(+). The catalysed reaction is 17beta-estradiol + reduced [NADPH--hemoprotein reductase] + O2 = 4-hydroxy-17beta-estradiol + oxidized [NADPH--hemoprotein reductase] + H2O + H(+). The enzyme catalyses 17beta-estradiol + reduced [NADPH--hemoprotein reductase] + O2 = 6alpha-hydroxy-17beta-estradiol + oxidized [NADPH--hemoprotein reductase] + H2O + H(+). It carries out the reaction 17beta-estradiol + reduced [NADPH--hemoprotein reductase] + O2 = 7alpha-hydroxy-17beta-estradiol + oxidized [NADPH--hemoprotein reductase] + H2O + H(+). It catalyses the reaction 17beta-estradiol + reduced [NADPH--hemoprotein reductase] + O2 = 15alpha-hydroxy-17beta-estradiol + oxidized [NADPH--hemoprotein reductase] + H2O + H(+). The catalysed reaction is (5Z,8Z,11Z)-eicosatrienoate + reduced [NADPH--hemoprotein reductase] + O2 = 19-hydroxy-(5Z,8Z,11Z)-eicosatrienoate + oxidized [NADPH--hemoprotein reductase] + H2O + H(+). The enzyme catalyses (5Z,8Z,11Z,14Z)-eicosatetraenoate + reduced [NADPH--hemoprotein reductase] + O2 = 16-hydroxy-(5Z,8Z,11Z,14Z)-eicosatetraenoate + oxidized [NADPH--hemoprotein reductase] + H2O + H(+). It carries out the reaction (5Z,8Z,11Z,14Z)-eicosatetraenoate + reduced [NADPH--hemoprotein reductase] + O2 = 17-hydroxy-(5Z,8Z,11Z,14Z)-eicosatetraenoate + oxidized [NADPH--hemoprotein reductase] + H2O + H(+). It catalyses the reaction (5Z,8Z,11Z,14Z)-eicosatetraenoate + reduced [NADPH--hemoprotein reductase] + O2 = 18-hydroxy-(5Z,8Z,11Z,14Z)-eicosatetraenoate + oxidized [NADPH--hemoprotein reductase] + H2O + H(+). The catalysed reaction is (5Z,8Z,11Z,14Z)-eicosatetraenoate + reduced [NADPH--hemoprotein reductase] + O2 = 19-hydroxy-(5Z,8Z,11Z,14Z)-eicosatetraenoate + oxidized [NADPH--hemoprotein reductase] + H2O + H(+). The enzyme catalyses (5Z,8Z,11Z,14Z,17Z)-eicosapentaenoate + reduced [NADPH--hemoprotein reductase] + O2 = 19-hydroxy-(5Z,8Z,11Z,14Z,17Z)-eicosapentaenoate + oxidized [NADPH--hemoprotein reductase] + H2O + H(+). It carries out the reaction (5Z,8Z,11Z,14Z)-eicosatetraenoate + reduced [NADPH--hemoprotein reductase] + O2 = (8R,9S)-epoxy-(5Z,11Z,14Z)-eicosatrienoate + oxidized [NADPH--hemoprotein reductase] + H2O + H(+). It catalyses the reaction (5Z,8Z,11Z,14Z)-eicosatetraenoate + reduced [NADPH--hemoprotein reductase] + O2 = (11R,12S)-epoxy-(5Z,8Z,14Z)-eicosatrienoate + oxidized [NADPH--hemoprotein reductase] + H2O + H(+). The catalysed reaction is (5Z,8Z,11Z,14Z)-eicosatetraenoate + reduced [NADPH--hemoprotein reductase] + O2 = (14S,15R)-epoxy-(5Z,8Z,11Z)-eicosatrienoate + oxidized [NADPH--hemoprotein reductase] + H2O + H(+). The enzyme catalyses (5Z,8Z,11Z,14Z)-eicosatetraenoate + reduced [NADPH--hemoprotein reductase] + O2 = (14R,15S)-epoxy-(5Z,8Z,11Z)-eicosatrienoate + oxidized [NADPH--hemoprotein reductase] + H2O + H(+). It carries out the reaction (5Z,8Z,11Z,14Z,17Z)-eicosapentaenoate + reduced [NADPH--hemoprotein reductase] + O2 = (17R,18S)-epoxy-(5Z,8Z,11Z,14Z)-eicosatetraenoate + oxidized [NADPH--hemoprotein reductase] + H2O + H(+). It catalyses the reaction (4Z,7Z,10Z,13Z,16Z,19Z)-docosahexaenoate + reduced [NADPH--hemoprotein reductase] + O2 = (19S,20R)-epoxy-(4Z,7Z,10Z,13Z,16Z)-docosapentaenoate + oxidized [NADPH--hemoprotein reductase] + H2O + H(+). The catalysed reaction is (4Z,7Z,10Z,13Z,16Z,19Z)-docosahexaenoate + reduced [NADPH--hemoprotein reductase] + O2 = (19R,20S)-epoxy-(4Z,7Z,10Z,13Z,16Z)-docosapentaenoate + oxidized [NADPH--hemoprotein reductase] + H2O + H(+). The enzyme catalyses all-trans-retinol + reduced [NADPH--hemoprotein reductase] + O2 = all-trans-retinal + oxidized [NADPH--hemoprotein reductase] + 2 H2O + H(+). It carries out the reaction all-trans-retinal + reduced [NADPH--hemoprotein reductase] + O2 = all-trans-retinoate + oxidized [NADPH--hemoprotein reductase] + H2O + 2 H(+). It catalyses the reaction (13S)-hydroperoxy-(9Z,11E)-octadecadienoate = 13-oxo-(9Z,11E)-octadecadienoate + H2O. The catalysed reaction is (12S)-hydroperoxy-(5Z,8Z,10E,14Z)-eicosatetraenoate = 12-oxo-(5Z,8Z,10E,14Z)-eicosatetraenoate + H2O. The enzyme catalyses (15S)-hydroperoxy-(5Z,8Z,11Z,13E)-eicosatetraenoate = 15-oxo-(5Z,8Z,11Z,13E)-eicosatetraenoate + H2O. It carries out the reaction (5S)-hydroperoxy-(6E,8Z,11Z,14Z)-eicosatetraenoate = 5-oxo-(6E,8Z,11Z,14Z)-eicosatetraenoate + H2O. The protein operates within steroid hormone biosynthesis. Its pathway is lipid metabolism; fatty acid metabolism. It participates in cofactor metabolism; retinol metabolism. Its function is as follows. A cytochrome P450 monooxygenase involved in the metabolism of various endogenous substrates, including fatty acids, steroid hormones and vitamins. Mechanistically, uses molecular oxygen inserting one oxygen atom into a substrate, and reducing the second into a water molecule, with two electrons provided by NADPH via cytochrome P450 reductase (CPR; NADPH-ferrihemoprotein reductase). Catalyzes the hydroxylation of carbon-hydrogen bonds. Exhibits high catalytic activity for the formation of hydroxyestrogens from estrone (E1) and 17beta-estradiol (E2), namely 2-hydroxy E1 and E2, as well as D-ring hydroxylated E1 and E2 at the C15alpha and C16alpha positions. Displays different regioselectivities for polyunsaturated fatty acids (PUFA) hydroxylation. Catalyzes the epoxidation of double bonds of certain PUFA. Converts arachidonic acid toward epoxyeicosatrienoic acid (EET) regioisomers, 8,9-, 11,12-, and 14,15-EET, that function as lipid mediators in the vascular system. Displays an absolute stereoselectivity in the epoxidation of eicosapentaenoic acid (EPA) producing the 17(R),18(S) enantiomer. May play an important role in all-trans retinoic acid biosynthesis in extrahepatic tissues. Catalyzes two successive oxidative transformation of all-trans retinol to all-trans retinal and then to the active form all-trans retinoic acid. May also participate in eicosanoids metabolism by converting hydroperoxide species into oxo metabolites (lipoxygenase-like reaction, NADPH-independent). The sequence is that of Cytochrome P450 1A1 (CYP1A1) from Felis catus (Cat).